A 312-amino-acid chain; its full sequence is Olfactory receptor 2J2 (312 aa).

At 1 to 26 (MMIKKNASSEDFFILLGFSNWPQLEV) the chain is on the extracellular side. N-linked (GlcNAc...) asparagine glycosylation occurs at asparagine 6. Residues 27 to 50 (VLFVVILIFYLMTLTGNLFIIILS) traverse the membrane as a helical segment. The Cytoplasmic segment spans residues 51–58 (YVDSHLHT). A helical transmembrane segment spans residues 59–80 (PMYFFLSNLSFLDLCHTTSSIP). At 81-101 (QLLVNLRGPEKTISYAGCMVQ) the chain is on the extracellular side. A disulfide bridge links cysteine 98 with cysteine 190. Residues 102 to 121 (LYFVLALGIAECVLLVVMSY) traverse the membrane as a helical segment. Residues 122 to 140 (DRYVAVCRPLHYTVLMHPR) lie on the Cytoplasmic side of the membrane. Residues 141-159 (FCHLLAAASWVIGFTISAL) form a helical membrane-spanning segment. The Extracellular segment spans residues 160-196 (HSSFTFWVPLCGHRLVDHFFCEVPALLRLSCVDTHAN). The helical transmembrane segment at 197–220 (ELTLMVMSSIFVLIPLILILTAYG) threads the bilayer. Over 221–237 (AIARAVLSMQSTTGLQK) the chain is Cytoplasmic. Residues 238-260 (VFRTCGAHLMVVSLFFIPVMCMY) form a helical membrane-spanning segment. Over 261–273 (LQPPSENSPDQGK) the chain is Extracellular. Residues 274–293 (FIALFYTVVTPSLNPLIYTL) form a helical membrane-spanning segment. The Cytoplasmic portion of the chain corresponds to 294–312 (RNKHVKGAAKRLLGWEWGK).

It belongs to the G-protein coupled receptor 1 family.

Its subcellular location is the cell membrane. Functionally, odorant receptor. The protein is Olfactory receptor 2J2 (OR2J2) of Homo sapiens (Human).